The sequence spans 410 residues: LanC-like protein GCR2 (410 aa).

Zn(2+)-binding residues include Cys283, Cys328, and His329.

Belongs to the LanC-like protein family. As to quaternary structure, may interact (via C-terminus) with GPA1.

Its function is as follows. May play a role in abscisic acid (ABA) signaling. The sequence is that of LanC-like protein GCR2 (GCR2) from Arabidopsis thaliana (Mouse-ear cress).